The following is an 86-amino-acid chain: UPF0213 protein OB0043 (86 aa).

The 78-residue stretch at 3–80 folds into the GIY-YIG domain; it reads EQHYVYILRC…LPRFEKLKLI (78 aa).

Belongs to the UPF0213 family.

This Oceanobacillus iheyensis (strain DSM 14371 / CIP 107618 / JCM 11309 / KCTC 3954 / HTE831) protein is UPF0213 protein OB0043.